A 452-amino-acid chain; its full sequence is Cobyrinate a,c-diamide synthase (452 aa).

One can recognise a GATase cobBQ-type domain in the interval 244–429 (RIAVARDRAF…LHLHWGTQAW (186 aa)). Residue Cys-325 is the Nucleophile of the active site.

This sequence belongs to the CobB/CbiA family. The cofactor is Mg(2+).

The catalysed reaction is cob(II)yrinate + 2 L-glutamine + 2 ATP + 2 H2O = cob(II)yrinate a,c diamide + 2 L-glutamate + 2 ADP + 2 phosphate + 2 H(+). It participates in cofactor biosynthesis; adenosylcobalamin biosynthesis; cob(II)yrinate a,c-diamide from sirohydrochlorin (anaerobic route): step 10/10. Its function is as follows. Catalyzes the ATP-dependent amidation of the two carboxylate groups at positions a and c of cobyrinate, using either L-glutamine or ammonia as the nitrogen source. This is Cobyrinate a,c-diamide synthase from Gloeobacter violaceus (strain ATCC 29082 / PCC 7421).